The primary structure comprises 165 residues: Protein SprT (165 aa).

The SprT-like domain maps to 22-163; it reads LAQANLKLGR…RCVHCGEQLT (142 aa). His-78 is a Zn(2+) binding site. Residue Glu-79 is part of the active site. Position 82 (His-82) interacts with Zn(2+).

The protein belongs to the SprT family. The cofactor is Zn(2+).

Its subcellular location is the cytoplasm. The protein is Protein SprT of Escherichia fergusonii (strain ATCC 35469 / DSM 13698 / CCUG 18766 / IAM 14443 / JCM 21226 / LMG 7866 / NBRC 102419 / NCTC 12128 / CDC 0568-73).